Here is a 402-residue protein sequence, read N- to C-terminus: MQMSPALTCLVLGLALVFGEGSAVHHPPSYVAHLASDFGVRVFQQVAQASKDRNVVFSPYGVASVLAMLQLTTGGETQQQIQAAMGFKIDDKGMAPALRHLYKELMGPWNKDEISTTDAIFVQRDLKLVQGFMPHFFRLFRSTVKQVDFSEVERARFIINDWVKTHTKGMISNLLGKGAVDQLTRLVLVNALYFNGQWKTPFPDSSTHRRLFHKSDGSTVSVPMMAQTNKFNYTEFTTPDGHYYDILELPYHGDTLSMFIAAPYEKEVPLSALTNILSAQLISHWKGNMTRLPRLLVLPKFSLETEVDLRKPLENLGMTDMFRQFQADFTSLSDQEPLHVAQALQKVKIEVNESGTVASSSTAVIVSARMAPEEIIMDRPFLFVVRHNPTGTVLFMGQVMEP.

The N-terminal stretch at 1 to 23 (MQMSPALTCLVLGLALVFGEGSA) is a signal peptide. N-linked (GlcNAc...) asparagine glycans are attached at residues N232, N288, and N352.

Belongs to the serpin family. As to quaternary structure, forms a heterodimer with TMPRSS7. Interacts with VTN. Binds LRP1B; binding is followed by internalization and degradation. Interacts with PPP1CB. In complex with PLAU/uPA, interacts with PLAUR/uPAR. Interacts with SORL1 and LRP1, either alone or in complex with PLAU; these interactions are abolished in the presence of LRPAP1/RAP. The ternary complex composed of PLAUR-PLAU-PAI1 also interacts with SORL1. Interacts with PLAT/tPA. Also interacts with SORL1, when complexed to PLAT/tPA. Inactivated by proteolytic attack of the urokinase-type (u-PA) and the tissue-type (TPA), cleaving the 369-Arg-|-Met-370 bond. Expressed in endothelial cells. Found in plasma, platelets, and hepatoma and fibrosarcoma cells.

It localises to the secreted. In terms of biological role, serine protease inhibitor. Inhibits TMPRSS7. Is a primary inhibitor of tissue-type plasminogen activator (PLAT) and urokinase-type plasminogen activator (PLAU). As PLAT inhibitor, it is required for fibrinolysis down-regulation and is responsible for the controlled degradation of blood clots. As PLAU inhibitor, it is involved in the regulation of cell adhesion and spreading. Acts as a regulator of cell migration, independently of its role as protease inhibitor. It is required for stimulation of keratinocyte migration during cutaneous injury repair. It is involved in cellular and replicative senescence. Plays a role in alveolar type 2 cells senescence in the lung. Is involved in the regulation of cementogenic differentiation of periodontal ligament stem cells, and regulates odontoblast differentiation and dentin formation during odontogenesis. The protein is Plasminogen activator inhibitor 1 (SERPINE1) of Homo sapiens (Human).